We begin with the raw amino-acid sequence, 239 residues long: tRNA (guanine-N(1)-)-methyltransferase (239 aa).

Residues G113 and L137–L142 contribute to the S-adenosyl-L-methionine site.

Belongs to the RNA methyltransferase TrmD family. In terms of assembly, homodimer.

The protein resides in the cytoplasm. The enzyme catalyses guanosine(37) in tRNA + S-adenosyl-L-methionine = N(1)-methylguanosine(37) in tRNA + S-adenosyl-L-homocysteine + H(+). Functionally, specifically methylates guanosine-37 in various tRNAs. The protein is tRNA (guanine-N(1)-)-methyltransferase of Cutibacterium acnes (strain DSM 16379 / KPA171202) (Propionibacterium acnes).